The primary structure comprises 211 residues: Phosphatidylglycerophosphatase C (211 aa).

The Cytoplasmic portion of the chain corresponds to 1–33 (MATHERRVVFFDLDGTLHQQDMFGSFLRYLLRR). A helical membrane pass occupies residues 34-54 (QPLNALLVLPLLPIIAIALLI). The Periplasmic segment spans residues 55 to 211 (KGRAARWPMS…TPRGELQQLE (157 aa)).

It depends on Mg(2+) as a cofactor.

The protein resides in the cell inner membrane. The catalysed reaction is a 1,2-diacyl-sn-glycero-3-phospho-(1'-sn-glycero-3'-phosphate) + H2O = a 1,2-diacyl-sn-glycero-3-phospho-(1'-sn-glycerol) + phosphate. The protein operates within phospholipid metabolism; phosphatidylglycerol biosynthesis; phosphatidylglycerol from CDP-diacylglycerol: step 2/2. In terms of biological role, lipid phosphatase which dephosphorylates phosphatidylglycerophosphate (PGP) to phosphatidylglycerol (PG). The protein is Phosphatidylglycerophosphatase C (pgpC) of Escherichia coli (strain K12).